The chain runs to 560 residues: Zinc finger protein 619 (560 aa).

C2H2-type zinc fingers lie at residues 188–210 (YKCG…QRVH), 216–238 (YTCK…QKIH), 244–266 (YSCE…QKLH), 272–294 (YECT…QRIH), 300–322 (FKCK…ERIH), 328–350 (YECK…QRIH), 356–378 (YECK…QRFH), 384–406 (YKCN…QRIH), 412–434 (YECQ…QRVH), and 440–462 (YECK…QKWH).

This sequence belongs to the krueppel C2H2-type zinc-finger protein family.

It is found in the nucleus. In terms of biological role, may be involved in transcriptional regulation. This is Zinc finger protein 619 (ZNF619) from Homo sapiens (Human).